Reading from the N-terminus, the 1174-residue chain is Tyrosine-protein phosphatase non-receptor type 21 (1174 aa).

The FERM domain maps to 23–308 (LVARIQLLNN…ARHKFYRLNQ (286 aa)). The segment covering 396–423 (SAHSTNSLNNPQPYLQPSPMSSNPSITG) has biased composition (polar residues). A disordered region spans residues 396–445 (SAHSTNSLNNPQPYLQPSPMSSNPSITGSDVMRPDYLPSHRHSAVIPPSY). A phosphoserine mark is found at S577, S589, S590, S637, and S673. The segment at 673–692 (SQPSVFTERTQREGPEEAEG) is disordered. Basic and acidic residues predominate over residues 681-692 (RTQREGPEEAEG). Phosphoserine is present on residues S710 and S711. 2 disordered regions span residues 711 to 745 (SEEE…DPPG) and 769 to 806 (KRMM…TSGR). A compositionally biased stretch (acidic residues) spans 712–722 (EEEEDEDFEEE). A compositionally biased stretch (polar residues) spans 796 to 805 (MSESDLTTSG). Phosphoserine occurs at positions 797, 799, and 804. Residues 896–1167 (VFTEYERILK…TFVYRVLIQF (272 aa)) enclose the Tyrosine-protein phosphatase domain. Residues E1067, 1108-1114 (CSAGVGR), and Q1152 each bind substrate. Catalysis depends on C1108, which acts as the Phosphocysteine intermediate.

It belongs to the protein-tyrosine phosphatase family. Non-receptor class subfamily.

Its subcellular location is the cytoplasm. It localises to the cytoskeleton. The enzyme catalyses O-phospho-L-tyrosyl-[protein] + H2O = L-tyrosyl-[protein] + phosphate. This Homo sapiens (Human) protein is Tyrosine-protein phosphatase non-receptor type 21 (PTPN21).